The primary structure comprises 643 residues: Cell pattern formation-associated protein asm-1 (643 aa).

Residues 1–37 (MNPNTPADVYYGQMSQGSSMPVTTVPSHSHYASQQPP) form a disordered region. Residues 13–33 (QMSQGSSMPVTTVPSHSHYAS) show a composition bias toward polar residues. Positions 116–222 (RVTATLWEDE…HNIGALLYHP (107 aa)) constitute an HTH APSES-type domain. Positions 150-171 (GTKLLNVAGMTRGRRDGILKSE) form a DNA-binding region, H-T-H motif. The interval 229-627 (SQVMAAAEQR…GSLPSPTYTA (399 aa)) is disordered. Residues 306–335 (DGYQWSQQSMSGTQGNSSLSLDTSLGSNAR) show a composition bias toward polar residues. Residues 336–349 (SMPSTPATTPPGST) are compositionally biased toward low complexity. Over residues 350–367 (IQSMQNYPPVSQSYESSR) the composition is skewed to polar residues. The span at 368 to 391 (QMYQGQSAQQAQYQSQQHYSSQPQ) shows a compositional bias: low complexity. Polar residues-rich tracts occupy residues 471–481 (GSYNYNTQAVN), 529–551 (QPSS…TQGN), and 563–577 (SLPN…VMNG). Residues 583-612 (KRGRDDDDDGGRPTTSAPNLGPGMDMKRRK) are nuclear localization domain.

It belongs to the EFG1/PHD1/stuA family.

Its subcellular location is the nucleus. In terms of biological role, transcription factor that regulates asexual reproduction. Binds the StuA-response elements (StRE) with the consensus sequence 5'-(A/T)CGCG(T/A)N(A/C)-3' at the promoters of target genes. Required for rapid conidial germination, normal vegetative morphology, and protoperithecium formation. This chain is Cell pattern formation-associated protein asm-1, found in Neurospora crassa (strain ATCC 24698 / 74-OR23-1A / CBS 708.71 / DSM 1257 / FGSC 987).